The following is a 147-amino-acid chain: Hemoglobin subunit gamma-1 (147 aa).

At Gly-2 the chain carries N-acetylglycine; in form Hb F1. The region spanning 3-147 (HFTEEDKATI…VASALSSRYH (145 aa)) is the Globin domain. Thr-13 carries the phosphothreonine modification. 3 positions are modified to phosphoserine: Ser-45, Ser-51, and Ser-53. An N6-acetyllysine modification is found at Lys-60. Position 64 (His-64) interacts with heme b. Lys-83 carries the N6-acetyllysine modification. Heme b is bound at residue His-93. Cys-94 carries the S-nitrosocysteine modification. Ser-140 is modified (phosphoserine).

The protein belongs to the globin family. Heterotetramer of two alpha chains and two gamma chains in fetal hemoglobin (Hb F). In the case of deletions affecting one or more of the alpha chains, the excess gamma chains form homotetramers that exhibit neither Bohr effect nor heme-heme cooperativity (hemoglobin Bart's). Acetylation of Gly-2 converts Hb F to the minor Hb F1. As to expression, red blood cells.

Functionally, gamma chains make up the fetal hemoglobin F, in combination with alpha chains. In Homo sapiens (Human), this protein is Hemoglobin subunit gamma-1 (HBG1).